Here is a 211-residue protein sequence, read N- to C-terminus: Pupal cuticle protein G1A (211 aa).

5 consecutive repeat copies span residues 13–16, 21–24, 33–36, 111–114, and 179–182.

In terms of biological role, component of the cuticle of the pupa of Tenebrio molitor. This Tenebrio molitor (Yellow mealworm beetle) protein is Pupal cuticle protein G1A.